The chain runs to 205 residues: MRLPKGIYGITDDSYNVKNHVDAAKVFLEGGVRIIQYRRKEGSIRQMLNEAKEIRKLCNQYGAVMIVDDRVDIAVLSDADGVHVGLEDAPVDEVKRRFSGIIIGASASTVDEAKEGEKAGADYLGAGSIFPSPTKPDYRILGLEGLRRVVQSVSIPVYAIGGVTLESIPAIKATGAWGAAVISGILAAKDPLEMAKRFVKAWDEA.

Residues 36-40 and Asp68 contribute to the 4-amino-2-methyl-5-(diphosphooxymethyl)pyrimidine site; that span reads QYRRK. Mg(2+)-binding residues include Asp69 and Asp88. 4-amino-2-methyl-5-(diphosphooxymethyl)pyrimidine is bound at residue Ser106. Residue 132 to 134 participates in 2-[(2R,5Z)-2-carboxy-4-methylthiazol-5(2H)-ylidene]ethyl phosphate binding; that stretch reads SPT. Lys135 lines the 4-amino-2-methyl-5-(diphosphooxymethyl)pyrimidine pocket. 2-[(2R,5Z)-2-carboxy-4-methylthiazol-5(2H)-ylidene]ethyl phosphate-binding positions include Gly162 and 182 to 183; that span reads IS.

Belongs to the thiamine-phosphate synthase family. Mg(2+) is required as a cofactor.

It catalyses the reaction 2-[(2R,5Z)-2-carboxy-4-methylthiazol-5(2H)-ylidene]ethyl phosphate + 4-amino-2-methyl-5-(diphosphooxymethyl)pyrimidine + 2 H(+) = thiamine phosphate + CO2 + diphosphate. The enzyme catalyses 2-(2-carboxy-4-methylthiazol-5-yl)ethyl phosphate + 4-amino-2-methyl-5-(diphosphooxymethyl)pyrimidine + 2 H(+) = thiamine phosphate + CO2 + diphosphate. It carries out the reaction 4-methyl-5-(2-phosphooxyethyl)-thiazole + 4-amino-2-methyl-5-(diphosphooxymethyl)pyrimidine + H(+) = thiamine phosphate + diphosphate. It functions in the pathway cofactor biosynthesis; thiamine diphosphate biosynthesis; thiamine phosphate from 4-amino-2-methyl-5-diphosphomethylpyrimidine and 4-methyl-5-(2-phosphoethyl)-thiazole: step 1/1. Condenses 4-methyl-5-(beta-hydroxyethyl)thiazole monophosphate (THZ-P) and 2-methyl-4-amino-5-hydroxymethyl pyrimidine pyrophosphate (HMP-PP) to form thiamine monophosphate (TMP). The protein is Thiamine-phosphate synthase of Caldivirga maquilingensis (strain ATCC 700844 / DSM 13496 / JCM 10307 / IC-167).